The sequence spans 538 residues: MDQSGVRNDAFGVDKFGLKNLKAVHWNLGTAALYEYALRNGEAELTREGALCAETGEFTGRSPKDKYTVRDALTDKTMSWSTNQSITPEQFAVLHADFIKHAEGMTLYAQDLCGGADPKFQIKTRVYTELAWHSLFIRTMLRRPETAALADFVPELTIIDLPSFRADPARHGVRSPTVVAIDFTRKIVLIGGTHYAGEMKKSVFTTLNFYLPEQGVLPMHCSANVGAKGDAAVFFGLSGTGKTTLSADPQRTLLGDDEHGWGPDGVFNFEGGCYAKTIRLSREAEPAIYDASLRFGAVLENVVVDSQTRAVDFDDGSKTENTRSAYPLDAIPNASPTGCAGQPKNIVMLAADAFGVLPPIAKLTPSQAMYHFLSGYTAKVAGTERGLGSEPQPEFSACFGAPFLPRDPTVYGEMLRKLIAKHNVDCWLVNTGWTGGKFGIGNRMPIKVTRALLTAALDGSLRNVTFRTDPYFGFAVPTALPGVPSDILDPINTWADKADFKKTAQALVSMFRQNFTKFEKLVDADVLAAAPDARQAAE.

Substrate-binding residues include arginine 61, tyrosine 195, and lysine 201. Residues lysine 201, histidine 220, and 236–244 (GLSGTGKTT) contribute to the ATP site. Lysine 201 and histidine 220 together coordinate Mn(2+). Aspartate 257 contributes to the Mn(2+) binding site. Residues glutamate 285, arginine 323, and threonine 449 each coordinate ATP. Residue arginine 323 participates in substrate binding.

It belongs to the phosphoenolpyruvate carboxykinase (ATP) family. Requires Mn(2+) as cofactor.

The protein resides in the cytoplasm. The catalysed reaction is oxaloacetate + ATP = phosphoenolpyruvate + ADP + CO2. Its pathway is carbohydrate biosynthesis; gluconeogenesis. Functionally, involved in the gluconeogenesis. Catalyzes the conversion of oxaloacetate (OAA) to phosphoenolpyruvate (PEP) through direct phosphoryl transfer between the nucleoside triphosphate and OAA. This is Phosphoenolpyruvate carboxykinase (ATP) from Afipia carboxidovorans (strain ATCC 49405 / DSM 1227 / KCTC 32145 / OM5) (Oligotropha carboxidovorans).